The primary structure comprises 128 residues: Protein BEX2 (128 aa).

R50 bears the Omega-N-methylarginine mark. The segment at S107–P128 is disordered. Residues P115–P128 show a composition bias toward basic and acidic residues. Positions H117–H121 are his cluster. C125 is a binding site for Zn(2+).

This sequence belongs to the BEX family. Interacts with LMO2, possibly leading to regulate the transcriptional activity of a DNA-binding complex containing LMO2. Interacts with OMP. In terms of tissue distribution, expressed in central nervous system, with high level in pituitary, cerebellum and temporal lobe. Widely expressed in breast cancer cell lines.

It localises to the cytoplasm. The protein resides in the nucleus. Its function is as follows. Regulator of mitochondrial apoptosis and G1 cell cycle in breast cancer. Protects the breast cancer cells against mitochondrial apoptosis and this effect is mediated through the modulation of BCL2 protein family, which involves the positive regulation of anti-apoptotic member BCL2 and the negative regulation of pro-apoptotic members BAD, BAK1 and PUMA. Required for the normal cell cycle progression during G1 in breast cancer cells through the regulation of CCND1 and CDKN1A. Regulates the level of PP2A regulatory subunit B and PP2A phosphatase activity. In absence of reductive stress, acts as a pseudosubstrate for the CRL2(FEM1B) complex: associates with FEM1B via zinc, thereby preventing association between FEM1B and its substrates. The polypeptide is Protein BEX2 (BEX2) (Homo sapiens (Human)).